The following is a 380-amino-acid chain: Succinyl-diaminopimelate desuccinylase (380 aa).

Histidine 69 lines the Zn(2+) pocket. Residue aspartate 71 is part of the active site. Residue aspartate 102 coordinates Zn(2+). Catalysis depends on glutamate 135, which acts as the Proton acceptor. Zn(2+)-binding residues include glutamate 136, glutamate 164, and histidine 353.

Belongs to the peptidase M20A family. DapE subfamily. In terms of assembly, homodimer. It depends on Zn(2+) as a cofactor. The cofactor is Co(2+).

It carries out the reaction N-succinyl-(2S,6S)-2,6-diaminopimelate + H2O = (2S,6S)-2,6-diaminopimelate + succinate. The protein operates within amino-acid biosynthesis; L-lysine biosynthesis via DAP pathway; LL-2,6-diaminopimelate from (S)-tetrahydrodipicolinate (succinylase route): step 3/3. Its function is as follows. Catalyzes the hydrolysis of N-succinyl-L,L-diaminopimelic acid (SDAP), forming succinate and LL-2,6-diaminopimelate (DAP), an intermediate involved in the bacterial biosynthesis of lysine and meso-diaminopimelic acid, an essential component of bacterial cell walls. This chain is Succinyl-diaminopimelate desuccinylase, found in Cereibacter sphaeroides (strain ATCC 17023 / DSM 158 / JCM 6121 / CCUG 31486 / LMG 2827 / NBRC 12203 / NCIMB 8253 / ATH 2.4.1.) (Rhodobacter sphaeroides).